The sequence spans 712 residues: Polyribonucleotide nucleotidyltransferase (712 aa).

Mg(2+) contacts are provided by Asp-493 and Asp-499. Residues Pro-560 to Ile-619 enclose the KH domain. An S1 motif domain is found at Gly-629–Leu-697.

The protein belongs to the polyribonucleotide nucleotidyltransferase family. The cofactor is Mg(2+).

Its subcellular location is the cytoplasm. The catalysed reaction is RNA(n+1) + phosphate = RNA(n) + a ribonucleoside 5'-diphosphate. Involved in mRNA degradation. Catalyzes the phosphorolysis of single-stranded polyribonucleotides processively in the 3'- to 5'-direction. The sequence is that of Polyribonucleotide nucleotidyltransferase from Synechococcus sp. (strain JA-2-3B'a(2-13)) (Cyanobacteria bacterium Yellowstone B-Prime).